The following is a 446-amino-acid chain: Maltoporin (446 aa).

Positions 1 to 25 are cleaved as a signal peptide; the sequence is MMTTLRKLPLAVAVAAGMMSVQAMA.

This sequence belongs to the porin LamB (TC 1.B.3) family. In terms of assembly, homotrimer formed of three 18-stranded antiparallel beta-barrels, containing three independent channels.

The protein localises to the cell outer membrane. The enzyme catalyses beta-maltose(in) = beta-maltose(out). Its function is as follows. Involved in the transport of maltose and maltodextrins. This is Maltoporin from Escherichia fergusonii (strain ATCC 35469 / DSM 13698 / CCUG 18766 / IAM 14443 / JCM 21226 / LMG 7866 / NBRC 102419 / NCTC 12128 / CDC 0568-73).